We begin with the raw amino-acid sequence, 436 residues long: 3-oxo-tetronate kinase (436 aa).

Residues S272, 372–375 (GGET), and G415 each bind ATP.

The protein belongs to the four-carbon acid sugar kinase family.

It catalyses the reaction 3-dehydro-L-erythronate + ATP = 3-dehydro-4-O-phospho-L-erythronate + ADP + H(+). The enzyme catalyses 3-dehydro-D-erythronate + ATP = 3-dehydro-4-O-phospho-D-erythronate + ADP + H(+). Catalyzes the ATP-dependent phosphorylation of 3-oxo-tetronate to 3-oxo-tetronate 4-phosphate. The protein is 3-oxo-tetronate kinase of Brucella melitensis biotype 1 (strain ATCC 23456 / CCUG 17765 / NCTC 10094 / 16M).